The sequence spans 448 residues: Exodeoxyribonuclease 7 large subunit (448 aa).

It belongs to the XseA family. In terms of assembly, heterooligomer composed of large and small subunits.

It localises to the cytoplasm. It carries out the reaction Exonucleolytic cleavage in either 5'- to 3'- or 3'- to 5'-direction to yield nucleoside 5'-phosphates.. Functionally, bidirectionally degrades single-stranded DNA into large acid-insoluble oligonucleotides, which are then degraded further into small acid-soluble oligonucleotides. In Bacillus pumilus (strain SAFR-032), this protein is Exodeoxyribonuclease 7 large subunit.